An 852-amino-acid polypeptide reads, in one-letter code: RNA-binding protein 10 (852 aa).

Basic and acidic residues-rich tracts occupy residues 1–14 (MEYERRGGRGDRTG) and 21–45 (RSQDDGGENRSRDHDYRDMDYRSYP). The tract at residues 1-78 (MEYERRGGRG…RGQLQSHGVQ (78 aa)) is disordered. The region spanning 37–132 (RDMDYRSYPR…QKVSMHYSDP (96 aa)) is the RRM 1 domain. Serine 61 bears the Phosphoserine mark. A RanBP2-type zinc finger spans residues 135 to 165 (KINEDWLCNKCGVQNFKRREKCFKCGVPKSE). Residues 223 to 307 (DTIILRNLNP…KTINVEFAKG (85 aa)) enclose the RRM 2 domain. The residue at position 306 (lysine 306) is an N6-acetyllysine. Disordered stretches follow at residues 343 to 365 (GGESTWAAPEEPPVDYSYYQQDE), 386 to 410 (KGPGMTGTKGDTSGAGPETSLEGGT), 426 to 446 (APGLYQQSAEGSSGQGTATNS), 459 to 489 (SELQSPTHPSSALPPATSPTAPESYSQYPVP), 542 to 568 (EQSADGHKDTGASSKEGKEKKEKHKTK), and 634 to 675 (DLPK…EEKL). Residues 430 to 446 (YQQSAEGSSGQGTATNS) show a composition bias toward polar residues. Positions 463–484 (SPTHPSSALPPATSPTAPESYS) are enriched in low complexity. Over residues 545–561 (ADGHKDTGASSKEGKEK) the composition is skewed to basic and acidic residues. Residues serine 640, serine 645, serine 655, serine 658, and serine 660 each carry the phosphoserine modification. Over residues 665 to 675 (ERGGPEREEKL) the composition is skewed to basic and acidic residues. The C2H2-type; atypical zinc-finger motif lies at 681–706 (LACLLCRRQFPSKEALIRHQQLSGLH). A phosphoserine mark is found at serine 703, serine 719, and serine 767. Positions 740 to 783 (AAERREKYGIPEPPEPKRRKYGGISTASVDFEQPTRDGLGSDNI) are disordered. In terms of domain architecture, G-patch spans 780 to 826 (SDNIGSRMLQAMGWKEGSGLGRKKQGIVTPIEAQTRVRGSGLGARGS). Arginine 824 is modified (omega-N-methylarginine).

Associates with the spliceosome. Component of a large chromatin remodeling complex, at least composed of MYSM1, PCAF, RBM10 and KIF11/TRIP5.

It localises to the nucleus. Its function is as follows. Binds to ssRNA containing the consensus sequence 5'-AGGUAA-3'. May be involved in post-transcriptional processing, most probably in mRNA splicing. Binds to RNA homopolymers, with a preference for poly(G) and poly(U) and little for poly(A). May bind to specific miRNA hairpins. The chain is RNA-binding protein 10 from Rattus norvegicus (Rat).